Reading from the N-terminus, the 116-residue chain is Large ribosomal subunit protein uL18 (116 aa).

This sequence belongs to the universal ribosomal protein uL18 family. As to quaternary structure, part of the 50S ribosomal subunit; part of the 5S rRNA/L5/L18/L25 subcomplex. Contacts the 5S and 23S rRNAs.

Its function is as follows. This is one of the proteins that bind and probably mediate the attachment of the 5S RNA into the large ribosomal subunit, where it forms part of the central protuberance. This Shewanella loihica (strain ATCC BAA-1088 / PV-4) protein is Large ribosomal subunit protein uL18.